A 285-amino-acid chain; its full sequence is Hsp90 co-chaperone Cdc37-like 1 (285 aa).

The disordered stretch occupies residues 34–54 (LHNSESMDQEQAMAQAELSEL). A coiled-coil region spans residues 35 to 73 (HNSESMDQEQAMAQAELSELQRSEEEWRRKEAALSQGEN).

This sequence belongs to the CDC37 family. As to quaternary structure, forms complexes with Hsp70 and Hsp90.

It is found in the cytoplasm. Functionally, co-chaperone that binds to numerous proteins and promotes their interaction with Hsp70 and Hsp90. The polypeptide is Hsp90 co-chaperone Cdc37-like 1 (cdc37l1) (Xenopus tropicalis (Western clawed frog)).